The following is a 25-amino-acid chain: Repetitive proline-rich cell wall protein (25 aa).

Residues 1–25 are disordered; it reads NYDKPPVEKPPVYKPPVEKPPVYKP. 4 repeat units span residues 5–9, 10–14, 15–19, and 20–24. Residues 5 to 24 are 4 X 5 AA tandem repeats of P-P-V-[EY]-K; it reads PPVEKPPVYKPPVEKPPVYK. Residues proline 6, proline 11, proline 16, and proline 21 each carry the 4-hydroxyproline modification. Pro residues predominate over residues 8-25; sequence EKPPVYKPPVEKPPVYKP.

It belongs to the plant proline-rich protein superfamily. ENOD12 family.

The protein resides in the secreted. Its subcellular location is the cell wall. This Phaseolus vulgaris (Kidney bean) protein is Repetitive proline-rich cell wall protein.